The primary structure comprises 447 residues: Phosphoglucosamine mutase (447 aa).

Serine 107 functions as the Phosphoserine intermediate in the catalytic mechanism. Positions 107, 246, 248, and 250 each coordinate Mg(2+). Position 107 is a phosphoserine (serine 107).

Belongs to the phosphohexose mutase family. Requires Mg(2+) as cofactor. In terms of processing, activated by phosphorylation.

The enzyme catalyses alpha-D-glucosamine 1-phosphate = D-glucosamine 6-phosphate. Its function is as follows. Catalyzes the conversion of glucosamine-6-phosphate to glucosamine-1-phosphate. The chain is Phosphoglucosamine mutase from Ralstonia pickettii (strain 12J).